A 516-amino-acid polypeptide reads, in one-letter code: 2-isopropylmalate synthase (516 aa).

The region spanning 5–267 (IIIFDTTLRD…STDINIKEIH (263 aa)) is the Pyruvate carboxyltransferase domain. Residues Asp14, His202, His204, and Asn238 each contribute to the Mn(2+) site. The segment at 393 to 516 (KLEYFDVQSK…VNKELERLQK (124 aa)) is regulatory domain.

This sequence belongs to the alpha-IPM synthase/homocitrate synthase family. LeuA type 1 subfamily. Homodimer. Mn(2+) is required as a cofactor.

The protein resides in the cytoplasm. It catalyses the reaction 3-methyl-2-oxobutanoate + acetyl-CoA + H2O = (2S)-2-isopropylmalate + CoA + H(+). The protein operates within amino-acid biosynthesis; L-leucine biosynthesis; L-leucine from 3-methyl-2-oxobutanoate: step 1/4. Catalyzes the condensation of the acetyl group of acetyl-CoA with 3-methyl-2-oxobutanoate (2-ketoisovalerate) to form 3-carboxy-3-hydroxy-4-methylpentanoate (2-isopropylmalate). The chain is 2-isopropylmalate synthase from Buchnera aphidicola subsp. Cinara cedri (strain Cc).